The chain runs to 556 residues: Formate--tetrahydrofolate ligase (556 aa).

An ATP-binding site is contributed by 65–72 (TPAGEGKS).

This sequence belongs to the formate--tetrahydrofolate ligase family.

The catalysed reaction is (6S)-5,6,7,8-tetrahydrofolate + formate + ATP = (6R)-10-formyltetrahydrofolate + ADP + phosphate. Its pathway is one-carbon metabolism; tetrahydrofolate interconversion. In Clostridium perfringens (strain SM101 / Type A), this protein is Formate--tetrahydrofolate ligase.